Here is a 376-residue protein sequence, read N- to C-terminus: MAIRKEEESREEQSNSFLLDALYCEEEKWDDEGEEVEENSSLSSSSSPFVVLQQDLFWEDEDLVTLFSKEEEQGLSCLDDVYLSTDRKEAVGWILRVNAHYGFSTLAAVLAITYLDKFICSYSLQRDKPWMLQLVSVACLSLAAKVEETQVPLLLDFQVEETKYVFEAKTIQRMELLILSTLEWKMHLITPISFVDHIIRRLGLKNNAHWDFLNKCHRLLLSVISDSRFVGYLPSVVAAATMMRIIEQVDPFDPLSYQTNLLGVLNLTKEKVKTCYDLILQLPVDRIGLQIQIQSSKKRKSHDSSSSLNSPSCVIDANPFNSDESSNDSWSASSCNPPTSSSSPQQQPPLKKMRGAEENEKKKPILHLPWAIVATP.

The segment at 298–376 is disordered; the sequence is KRKSHDSSSS…HLPWAIVATP (79 aa). The span at 321 to 349 shows a compositional bias: low complexity; sequence NSDESSNDSWSASSCNPPTSSSSPQQQPP. The segment covering 354 to 363 has biased composition (basic and acidic residues); the sequence is RGAEENEKKK.

The protein belongs to the cyclin family. Cyclin D subfamily. In terms of assembly, interacts with the C-terminal domain of CDKA-1. Interacts with KRP1/ICK1. Interacts with KRP6. In terms of processing, phosphorylated. Highly expressed in roots and at lower levels in leaves and flowers. Expressed in vegetative shoot meristem and inflorescence.

In terms of biological role, involved in the control of the cell cycle at the G1/S (start) transition. Activates the G1/S phase transition in response to cytokinin hormone signal, but declines in response to sucrose starvation leading to G1 arrest. Involved in the induction of mitotic cell division. Plays an important role in the switch from cell proliferation to the final stages of differentiation during plant development. May not be involved in the activation of cell cycle in the root apical meristem (RAM) in the early phase of seed germination. Promotes divisions in the guard cells (GCs) after the guard mother cells (GMC) symmetric division. The sequence is that of Cyclin-D3-1 (CYCD3-1) from Arabidopsis thaliana (Mouse-ear cress).